Here is a 362-residue protein sequence, read N- to C-terminus: Phosphoserine aminotransferase (362 aa).

Residues serine 9 and arginine 42 each coordinate L-glutamate. Pyridoxal 5'-phosphate is bound by residues 76–77 (GR), tryptophan 102, threonine 153, aspartate 174, and glutamine 197. An N6-(pyridoxal phosphate)lysine modification is found at lysine 198. Position 239–240 (239–240 (NT)) interacts with pyridoxal 5'-phosphate.

It belongs to the class-V pyridoxal-phosphate-dependent aminotransferase family. SerC subfamily. In terms of assembly, homodimer. Requires pyridoxal 5'-phosphate as cofactor.

Its subcellular location is the cytoplasm. The enzyme catalyses O-phospho-L-serine + 2-oxoglutarate = 3-phosphooxypyruvate + L-glutamate. It carries out the reaction 4-(phosphooxy)-L-threonine + 2-oxoglutarate = (R)-3-hydroxy-2-oxo-4-phosphooxybutanoate + L-glutamate. It participates in amino-acid biosynthesis; L-serine biosynthesis; L-serine from 3-phospho-D-glycerate: step 2/3. Its pathway is cofactor biosynthesis; pyridoxine 5'-phosphate biosynthesis; pyridoxine 5'-phosphate from D-erythrose 4-phosphate: step 3/5. Functionally, catalyzes the reversible conversion of 3-phosphohydroxypyruvate to phosphoserine and of 3-hydroxy-2-oxo-4-phosphonooxybutanoate to phosphohydroxythreonine. This Klebsiella pneumoniae subsp. pneumoniae (strain ATCC 700721 / MGH 78578) protein is Phosphoserine aminotransferase.